A 317-amino-acid chain; its full sequence is Probable deoxyhypusine synthase 1 (317 aa).

Lys285 serves as the catalytic Nucleophile.

Belongs to the deoxyhypusine synthase family. NAD(+) is required as a cofactor.

It carries out the reaction [eIF5A protein]-L-lysine + spermidine = [eIF5A protein]-deoxyhypusine + propane-1,3-diamine. It functions in the pathway protein modification; eIF5A hypusination. Functionally, catalyzes the NAD-dependent oxidative cleavage of spermidine and the subsequent transfer of the butylamine moiety of spermidine to the epsilon-amino group of a specific lysine residue of the eIF-5A precursor protein to form the intermediate deoxyhypusine residue. The sequence is that of Probable deoxyhypusine synthase 1 (dys1) from Methanosarcina acetivorans (strain ATCC 35395 / DSM 2834 / JCM 12185 / C2A).